We begin with the raw amino-acid sequence, 334 residues long: Protein-methionine-sulfoxide reductase catalytic subunit MsrP (334 aa).

Positions 1–44 (MKKNQFLKESDVTAESVFFMKRRQVLKALGISAAALSLPHAAHA) form a signal peptide, tat-type signal. Mo-molybdopterin contacts are provided by residues N88, 91–92 (YE), C146, T181, N233, R238, and 249–251 (GIK).

This sequence belongs to the MsrP family. As to quaternary structure, heterodimer of a catalytic subunit (MsrP) and a heme-binding subunit (MsrQ). It depends on Mo-molybdopterin as a cofactor. Predicted to be exported by the Tat system. The position of the signal peptide cleavage has not been experimentally proven.

It is found in the periplasm. The catalysed reaction is L-methionyl-[protein] + a quinone + H2O = L-methionyl-(S)-S-oxide-[protein] + a quinol. It catalyses the reaction L-methionyl-[protein] + a quinone + H2O = L-methionyl-(R)-S-oxide-[protein] + a quinol. Its function is as follows. Part of the MsrPQ system that repairs oxidized periplasmic proteins containing methionine sulfoxide residues (Met-O), using respiratory chain electrons. Thus protects these proteins from oxidative-stress damage caused by reactive species of oxygen and chlorine generated by the host defense mechanisms. MsrPQ is essential for the maintenance of envelope integrity under bleach stress, rescuing a wide series of structurally unrelated periplasmic proteins from methionine oxidation, including the primary periplasmic chaperone SurA and the lipoprotein Pal. The catalytic subunit MsrP is non-stereospecific, being able to reduce both (R-) and (S-) diastereoisomers of methionine sulfoxide. This chain is Protein-methionine-sulfoxide reductase catalytic subunit MsrP, found in Escherichia coli O9:H4 (strain HS).